The following is an 894-amino-acid chain: Exocyst complex component 2 (894 aa).

The IPT/TIG domain maps to 5–89 (PVVTGLSPKE…GTSTVQFRAY (85 aa)). Residues 398-413 (HTSKDSGAQEKAKNRD) show a composition bias toward basic and acidic residues. The segment at 398-417 (HTSKDSGAQEKAKNRDSSQA) is disordered.

The protein belongs to the SEC5 family. In terms of assembly, the exocyst complex is composed of Sec3/Exoc1, Sec5/Exoc2, Sec6/Exoc3, Sec8/Exoc4, Sec10/Exoc5, Sec15/Exoc6, Exo70/Exoc7 and Exo84/Exoc8.

Its function is as follows. Component of the exocyst complex involved in the docking of exocytic vesicles with fusion sites on the plasma membrane. The polypeptide is Exocyst complex component 2 (Drosophila melanogaster (Fruit fly)).